Here is a 137-residue protein sequence, read N- to C-terminus: MLQPKRTKFRKQMTGHNRGLALRGSKVSFGEFALKAVARGRLTARQIESARRALTRHVKRGGKIWIRVFPDKPISKKPLEVRMGKGKGSVEYWVAQIQPGKVLYEIEGVSEELAREAFALAAAKLPLATSFVKRTVM.

The protein belongs to the universal ribosomal protein uL16 family. In terms of assembly, part of the 50S ribosomal subunit.

Functionally, binds 23S rRNA and is also seen to make contacts with the A and possibly P site tRNAs. The chain is Large ribosomal subunit protein uL16 from Pseudomonas putida (strain ATCC 47054 / DSM 6125 / CFBP 8728 / NCIMB 11950 / KT2440).